The primary structure comprises 20 residues: Thylakoid lumenal 20 kDa protein (20 aa).

A disordered region spans residues 1–20; the sequence is RDVDVGSFLPKSPSDPSMVL.

It localises to the plastid. It is found in the chloroplast thylakoid lumen. This chain is Thylakoid lumenal 20 kDa protein, found in Spinacia oleracea (Spinach).